Reading from the N-terminus, the 359-residue chain is uncharacterized protein (359 aa).

Gly46–Ser53 contributes to the ATP binding site.

It belongs to the archaeal ATPase family.

This is an uncharacterized protein from Methanocaldococcus jannaschii (strain ATCC 43067 / DSM 2661 / JAL-1 / JCM 10045 / NBRC 100440) (Methanococcus jannaschii).